A 603-amino-acid chain; its full sequence is Glutathione-regulated potassium-efflux system protein KefB (603 aa).

13 consecutive transmembrane segments (helical) span residues 5–25 (ALLT…PIAA), 29–49 (IGAV…GLGF), 53–73 (VEAI…IIGL), 87–107 (IFGV…GALY), 115–135 (SALI…LQLM), 152–172 (VLLF…ILAG), 180–202 (WERI…YLVR), 207–227 (FIAA…LVLG), 230–250 (LFME…GILL), 268–288 (GLLL…GILY), 291–311 (IVKI…VLYF), 326–346 (FAGV…AAAS), and 356–376 (PLLL…MQVI). In terms of domain architecture, RCK N-terminal spans 400 to 521 (EPQVIVVGFG…VRHFSRETFS (122 aa)).

It belongs to the monovalent cation:proton antiporter 2 (CPA2) transporter (TC 2.A.37) family. KefB subfamily. In terms of assembly, interacts with the regulatory subunit KefG.

Its subcellular location is the cell inner membrane. Its function is as follows. Pore-forming subunit of a potassium efflux system that confers protection against electrophiles. Catalyzes K(+)/H(+) antiport. This chain is Glutathione-regulated potassium-efflux system protein KefB, found in Pectobacterium atrosepticum (strain SCRI 1043 / ATCC BAA-672) (Erwinia carotovora subsp. atroseptica).